Here is a 416-residue protein sequence, read N- to C-terminus: Cell division protein FtsZ (416 aa).

Residues 20-24 (GGGVN), 107-109 (GTG), E138, R142, and D186 each bind GTP. Residues 319 to 335 (QETNANNSSPAQRQAES) show a composition bias toward polar residues. Positions 319-416 (QETNANNSSP…DSLDFPDFLK (98 aa)) are disordered. Over residues 376-392 (QDDDIPDDAGFDVDLPA) the composition is skewed to acidic residues. Positions 404 to 416 (ARKDSLDFPDFLK) are enriched in basic and acidic residues.

It belongs to the FtsZ family. As to quaternary structure, homodimer. Polymerizes to form a dynamic ring structure in a strictly GTP-dependent manner. Interacts directly with several other division proteins.

It localises to the cytoplasm. Functionally, essential cell division protein that forms a contractile ring structure (Z ring) at the future cell division site. The regulation of the ring assembly controls the timing and the location of cell division. One of the functions of the FtsZ ring is to recruit other cell division proteins to the septum to produce a new cell wall between the dividing cells. Binds GTP and shows GTPase activity. This Kocuria rhizophila (strain ATCC 9341 / DSM 348 / NBRC 103217 / DC2201) protein is Cell division protein FtsZ.